The chain runs to 211 residues: MSNENDDLSPQRRAPRLNERILSSISRRSVAAHPWHDLEIGPEAPSVFNVVIEISKGSKVKYELDKKTGLIKVDRILYSSVVYPQNYGFIPRTLCEDNDPMDVLVLMQEPVLPGCFLRARAIGLMPMIDQGEKDDKIIAVCADDPEYRHYTDIKQLPPHRLAEIRRFFEDYKKNENKDVAVDDFLPPNSAVNAIQYSMDLYAEYILHSLRK.

Residues Lys-61 and Arg-75 each contribute to the substrate site. Tyr-83 acts as the Proton donor in catalysis. Tyr-87 contacts substrate. Mg(2+) is bound by residues Asp-97, Asp-102, and Asp-134. Tyr-171 is a substrate binding site.

Belongs to the PPase family. Mg(2+) serves as cofactor.

It localises to the cytoplasm. The catalysed reaction is diphosphate + H2O = 2 phosphate + H(+). Strongly inhibited by Ca(2+). Catalyzes the irreversible hydrolysis of pyrophosphate (PPi) to phosphate. The protein is Soluble inorganic pyrophosphatase PPA1 of Solanum tuberosum (Potato).